A 338-amino-acid chain; its full sequence is DNA-directed RNA polymerase subunit alpha (338 aa).

An alpha N-terminal domain (alpha-NTD) region spans residues 1 to 230; the sequence is MRKITTSAYM…QQMSVFKGIL (230 aa). An alpha C-terminal domain (alpha-CTD) region spans residues 247–338; sequence FSKLLSSVED…ELKSQMSAKE (92 aa).

Belongs to the RNA polymerase alpha chain family. As to quaternary structure, homodimer. The RNAP catalytic core consists of 2 alpha, 1 beta, 1 beta' and 1 omega subunit. When a sigma factor is associated with the core the holoenzyme is formed, which can initiate transcription.

The enzyme catalyses RNA(n) + a ribonucleoside 5'-triphosphate = RNA(n+1) + diphosphate. In terms of biological role, DNA-dependent RNA polymerase catalyzes the transcription of DNA into RNA using the four ribonucleoside triphosphates as substrates. This chain is DNA-directed RNA polymerase subunit alpha, found in Campylobacter concisus (strain 13826).